Reading from the N-terminus, the 286-residue chain is Ribosomal RNA small subunit methyltransferase A (286 aa).

Asn-28, Leu-30, Gly-55, Glu-77, Asp-103, and Asn-123 together coordinate S-adenosyl-L-methionine.

It belongs to the class I-like SAM-binding methyltransferase superfamily. rRNA adenine N(6)-methyltransferase family. RsmA subfamily.

Its subcellular location is the cytoplasm. The catalysed reaction is adenosine(1518)/adenosine(1519) in 16S rRNA + 4 S-adenosyl-L-methionine = N(6)-dimethyladenosine(1518)/N(6)-dimethyladenosine(1519) in 16S rRNA + 4 S-adenosyl-L-homocysteine + 4 H(+). In terms of biological role, specifically dimethylates two adjacent adenosines (A1518 and A1519) in the loop of a conserved hairpin near the 3'-end of 16S rRNA in the 30S particle. May play a critical role in biogenesis of 30S subunits. This is Ribosomal RNA small subunit methyltransferase A from Bradyrhizobium sp. (strain BTAi1 / ATCC BAA-1182).